The primary structure comprises 860 residues: Leucine--tRNA ligase (860 aa).

The 'HIGH' region signature appears at 42 to 52 (PYPSGRLHMGH). Positions 619-623 (KMSKS) match the 'KMSKS' region motif. Lysine 622 is an ATP binding site.

It belongs to the class-I aminoacyl-tRNA synthetase family.

Its subcellular location is the cytoplasm. The catalysed reaction is tRNA(Leu) + L-leucine + ATP = L-leucyl-tRNA(Leu) + AMP + diphosphate. This chain is Leucine--tRNA ligase, found in Escherichia coli O17:K52:H18 (strain UMN026 / ExPEC).